Reading from the N-terminus, the 223-residue chain is Sigma non-opioid intracellular receptor 1 (223 aa).

The Lumenal portion of the chain corresponds to 1 to 9 (MQWAAGRRW). A targeting to endoplasmic reticulum-associated lipid droplets region spans residues 2–8 (QWAAGRR). Residues 10 to 30 (AWITLFLTIVAVLIQAVWLWL) form a helical membrane-spanning segment. The Cytoplasmic segment spans residues 31–223 (GTQSFVFQRE…LTTYLFGQDS (193 aa)). The important for ligand-binding stretch occupies residues 99 to 106 (SLSEYVLL). Residues 177-223 (VIPSTLAFALSDTIFSTQDFLTLFYTLRAYARGLRLELTTYLFGQDS) form a C-terminal hydrophobic region region.

Belongs to the ERG2 family. As to quaternary structure, homotrimer. Forms a ternary complex with ANK2 and ITPR3. The complex is disrupted by agonists. Interacts with KCNA4. Interacts with KCNA2; cocaine consumption leads to increased interaction. Interacts with RNF112 in an oxidative stress-regulated manner.

The protein localises to the nucleus inner membrane. It is found in the nucleus outer membrane. The protein resides in the nucleus envelope. It localises to the cytoplasmic vesicle. Its subcellular location is the endoplasmic reticulum membrane. The protein localises to the membrane. It is found in the lipid droplet. The protein resides in the cell junction. It localises to the cell membrane. Its subcellular location is the cell projection. The protein localises to the growth cone. It is found in the postsynaptic density membrane. Functions in lipid transport from the endoplasmic reticulum and is involved in a wide array of cellular functions probably through regulation of the biogenesis of lipid microdomains at the plasma membrane. Involved in the regulation of different receptors it plays a role in BDNF signaling and EGF signaling. Also regulates ion channels like the potassium channel and could modulate neurotransmitter release. Plays a role in calcium signaling through modulation together with ANK2 of the ITP3R-dependent calcium efflux at the endoplasmic reticulum. Plays a role in several other cell functions including proliferation, survival and death. Originally identified for its ability to bind various psychoactive drugs it is involved in learning processes, memory and mood alteration. Necessary for proper mitochondrial axonal transport in motor neurons, in particular the retrograde movement of mitochondria. Plays a role in protecting cells against oxidative stress-induced cell death via its interaction with RNF112. This is Sigma non-opioid intracellular receptor 1 (SIGMAR1) from Trichosurus vulpecula (Brush-tailed possum).